We begin with the raw amino-acid sequence, 83 residues long: Phytosulfokines 4 (83 aa).

The N-terminal stretch at 1-28 (MAARTVAVAAALAVLLIFAASSATVAMA) is a signal peptide. The propeptide occupies 29–74 (GRPTPTTSLDEEAAQAAAQSEIGGGCKEGEGEEECLARRTLTAHTD). Sulfotyrosine is present on residues Y75 and Y77. Residues 80–83 (QHHN) constitute a propeptide that is removed on maturation.

Belongs to the phytosulfokine family. In terms of processing, sulfation is important for activity and for the binding to a putative membrane receptor. PSK-alpha is produced by endopeptidase digestion. PSK-beta is produced from PSK-alpha by exopeptidase digestion.

Its subcellular location is the secreted. In terms of biological role, promotes plant cell differentiation, organogenesis and somatic embryogenesis as well as cell proliferation. In Oryza sativa subsp. japonica (Rice), this protein is Phytosulfokines 4 (PSK4).